A 196-amino-acid chain; its full sequence is GTP cyclohydrolase-2 (196 aa).

49-53 (RVHSE) is a GTP binding site. Residues Cys54, Cys65, and Cys67 each contribute to the Zn(2+) site. GTP contacts are provided by residues Gln70, 92–94 (EGR), and Thr114. The Proton acceptor role is filled by Asp126. Residue Arg128 is the Nucleophile of the active site. Residues Thr149 and Lys154 each coordinate GTP.

It belongs to the GTP cyclohydrolase II family. Homodimer. Requires Zn(2+) as cofactor.

It catalyses the reaction GTP + 4 H2O = 2,5-diamino-6-hydroxy-4-(5-phosphoribosylamino)-pyrimidine + formate + 2 phosphate + 3 H(+). It functions in the pathway cofactor biosynthesis; riboflavin biosynthesis; 5-amino-6-(D-ribitylamino)uracil from GTP: step 1/4. Functionally, catalyzes the conversion of GTP to 2,5-diamino-6-ribosylamino-4(3H)-pyrimidinone 5'-phosphate (DARP), formate and pyrophosphate. This chain is GTP cyclohydrolase-2, found in Shigella dysenteriae serotype 1 (strain Sd197).